Consider the following 256-residue polypeptide: Alcohol dehydrogenase (256 aa).

12 to 35 (FVAGLGGIGLDTSKELVKRDLKNL) serves as a coordination point for NAD(+). Ser-140 provides a ligand contact to substrate. Residue Tyr-153 is the Proton acceptor of the active site.

Belongs to the short-chain dehydrogenases/reductases (SDR) family. In terms of assembly, homodimer.

It carries out the reaction a primary alcohol + NAD(+) = an aldehyde + NADH + H(+). The catalysed reaction is a secondary alcohol + NAD(+) = a ketone + NADH + H(+). This is Alcohol dehydrogenase (Adh) from Drosophila mauritiana (Fruit fly).